Here is a 544-residue protein sequence, read N- to C-terminus: U1 small nuclear ribonucleoprotein component PRP42 (544 aa).

HAT repeat units follow at residues 7–39 (LIHDENFSTLTLNVSRYPKSLAYWEKLLNYIVK), 51–83 (QLLKLIRCTYSSMLNEFPYLENYYIDFALLEYK), 85–118 (GNVSMSHKIFQRGLQAFNQRSLLLWTSYLKFCNN), 121–156 (SHQKQLFKKYETAEEYVGLHFFSGEFWDLYLEQISS), and 163–195 (KYWNVLRKILEIPLHSFSKFYALWLQRIDDIMD). Positions 230–235 (KKKLKK) match the Nuclear localization signal motif. HAT repeat units lie at residues 255–288 (FESKIYINYYTSPETLVSSDEIETWIKYLDYTIT), 290–322 (QTDSLTHLNFQRALLPLAHYDLVWIKYSKWLIN), 366–397 (NLLEKIESSYSDNVENVDDFEIFWDYLQFKTF), and 456–488 (VEKNIFQKIIEFGWEYYLQNGMFWNCYCRLIYF).

In terms of assembly, component of the 18S U1 snRNP particle, a subcomplex of the spliceosome.

The protein resides in the nucleus. Functionally, essential component of the U1 snRNP particle, which recognizes and binds the 5'-splice site of pre-mRNA. Together with other non-snRNP factors, U1 snRNP forms the spliceosomal commitment complex, that targets pre-mRNA to the splicing pathway. U1 snRNP is cotranscriptionally recruited to intron-containing genes. Required for U1 snRNP biogenesis. The protein is U1 small nuclear ribonucleoprotein component PRP42 (PRP42) of Saccharomyces cerevisiae (strain ATCC 204508 / S288c) (Baker's yeast).